A 634-amino-acid chain; its full sequence is GTP-binding protein 4 (634 aa).

An N-acetylalanine modification is found at Ala-2. Position 103 is an N6-acetyllysine; alternate (Lys-103). A Glycyl lysine isopeptide (Lys-Gly) (interchain with G-Cter in SUMO2); alternate cross-link involves residue Lys-103. Ser-122 is modified (phosphoserine). One can recognise an OBG-type G domain in the interval 169–340; that stretch reads RTLLLCGYPN…VKTEACDRLL (172 aa). Residues 175–182, 221–225, and 289–292 contribute to the GTP site; these read GYPNVGKS, DTPGI, and NKCD. Lys-332 is covalently cross-linked (Glycyl lysine isopeptide (Lys-Gly) (interchain with G-Cter in SUMO2)). Phosphoserine is present on residues Ser-468, Ser-470, and Ser-472. The disordered stretch occupies residues 494 to 634; sequence KILQSKEKNK…KRKAGKKDRR (141 aa). Lys-534 is covalently cross-linked (Glycyl lysine isopeptide (Lys-Gly) (interchain with G-Cter in SUMO2)). Residues 544 to 554 show a composition bias toward basic residues; that stretch reads RRSRSVTRKRK. The residue at position 558 (Ser-558) is a Phosphoserine. A compositionally biased stretch (low complexity) spans 560-572; it reads PPSSTARSRSCSR. A compositionally biased stretch (basic and acidic residues) spans 573–585; the sequence is TPRDVSGLRDVKM. The span at 586-604 shows a compositional bias: basic residues; that stretch reads VKKAKTMMKKAQKKMNRLG. The span at 605–618 shows a compositional bias: basic and acidic residues; the sequence is KKGEADRHVFDMKP. Positions 619-634 are enriched in basic residues; it reads KHLLSGKRKAGKKDRR.

This sequence belongs to the TRAFAC class OBG-HflX-like GTPase superfamily. OBG GTPase family. NOG subfamily. As to quaternary structure, associates with pre-60S ribosomal particles. Interacts with MINAS-60 (product of an alternative open reading frame of RBM10). As to expression, ubiquitous.

The protein localises to the nucleus. It is found in the nucleolus. Involved in the biogenesis of the 60S ribosomal subunit. Acts as TP53 repressor, preventing TP53 stabilization and cell cycle arrest. The protein is GTP-binding protein 4 (Gtpbp4) of Mus musculus (Mouse).